The primary structure comprises 297 residues: Probable tyrosine phosphatase protein J2 (297 aa).

The Tyrosine-protein phosphatase domain maps to Asp-21–Tyr-286. The active-site Phosphocysteine intermediate is the Cys-227.

This sequence belongs to the protein-tyrosine phosphatase family.

The catalysed reaction is O-phospho-L-tyrosyl-[protein] + H2O = L-tyrosyl-[protein] + phosphate. This is Probable tyrosine phosphatase protein J2 (J3) from Microplitis demolitor (Parasitoid wasp).